The primary structure comprises 495 residues: MADRNLRDLLAPWVPDAPSRALREMTLDSRVAAAGDLFVAVVGHQADGRRYIPQAIAQGVAAIIAEAKGEATDGEIREMHGVPVIYLSQLNERLSALAGRFYHEPSDNLRLVGVTGTNGKTTTTQLLAQWSQLLGETSAVMGTVGNGLLGKVIPTENTTGSAVDVQHELAGLVDQDATFCAMEVSSHGLVQHRVAALKFAASVFTNLSRDHLDYHGDMEHYEAAKWLLYSEHHCGQAIINADDEVGRRWLAKLPDAVAVSMEDHINPNCHGRWLKATEVNYHDSGATIRFSSSWGDGEIESHLMGAFNVSNLLLALATLLALGYPLADLLKTAARLQPVCGRMEVFTAPGKPTVVVDYAHTPDALEKALQAARLHCAGKLWCVFGCGGDRDKGKRPLMGAIAEEFADVAVVTDDNPRTEEPRAIINDILAGMLDAGHAKVMEDRAEAVTCAVMQAKENDVVLVAGKGHEDYQIVGNQRLDYSDRVTVARLLGVIA.

UDP-N-acetyl-alpha-D-muramoyl-L-alanyl-D-glutamate is bound by residues leucine 27, serine 29, and 44–46 (HQA). 116–122 (GTNGKTT) is a binding site for ATP. Residues asparagine 157, 158–159 (TT), serine 185, glutamine 191, and arginine 193 each bind UDP-N-acetyl-alpha-D-muramoyl-L-alanyl-D-glutamate. Lysine 225 carries the N6-carboxylysine modification. Residues arginine 390, 414–417 (DNPR), glycine 465, and glutamate 469 contribute to the meso-2,6-diaminopimelate site. The Meso-diaminopimelate recognition motif signature appears at 414 to 417 (DNPR).

It belongs to the MurCDEF family. MurE subfamily. Mg(2+) serves as cofactor. Post-translationally, carboxylation is probably crucial for Mg(2+) binding and, consequently, for the gamma-phosphate positioning of ATP.

The protein resides in the cytoplasm. The enzyme catalyses UDP-N-acetyl-alpha-D-muramoyl-L-alanyl-D-glutamate + meso-2,6-diaminopimelate + ATP = UDP-N-acetyl-alpha-D-muramoyl-L-alanyl-gamma-D-glutamyl-meso-2,6-diaminopimelate + ADP + phosphate + H(+). Its pathway is cell wall biogenesis; peptidoglycan biosynthesis. Its function is as follows. Catalyzes the addition of meso-diaminopimelic acid to the nucleotide precursor UDP-N-acetylmuramoyl-L-alanyl-D-glutamate (UMAG) in the biosynthesis of bacterial cell-wall peptidoglycan. This Escherichia coli O157:H7 protein is UDP-N-acetylmuramoyl-L-alanyl-D-glutamate--2,6-diaminopimelate ligase.